The sequence spans 154 residues: MTSESTLPPVVPPLHSPKSPVWPTFPFHREGSRIWERGGGIAPRDLPSPLPTKRTRTYSATARASAGPVFKGVCKQFSRSQGHGFITPENGSEDIFVHVSDIEGEYVPVEGDEVTYKICPIPPKNQKFQAVEVVLTQLAPHTPHETWSGQVVGS.

Ser19 is subject to Phosphoserine. The disordered stretch occupies residues 38-62 (GGGIAPRDLPSPLPTKRTRTYSATA). The 68-residue stretch at 69–136 (VFKGVCKQFS…KFQAVEVVLT (68 aa)) folds into the CSD domain.

Its subcellular location is the nucleus. The protein localises to the cytoplasm. Its function is as follows. RNA-binding factor which binds specifically to the very 3'-UTR ends of both histone H1 and H3.3 mRNAs, encompassing the polyadenylation signal. Might play a central role in the negative regulation of histone variant synthesis in the developing brain. The sequence is that of Cold shock domain-containing protein C2 (Csdc2) from Mus musculus (Mouse).